The chain runs to 141 residues: Large ribosomal subunit protein uL11 (141 aa).

Belongs to the universal ribosomal protein uL11 family. Part of the ribosomal stalk of the 50S ribosomal subunit. Interacts with L10 and the large rRNA to form the base of the stalk. L10 forms an elongated spine to which L12 dimers bind in a sequential fashion forming a multimeric L10(L12)X complex. One or more lysine residues are methylated.

Functionally, forms part of the ribosomal stalk which helps the ribosome interact with GTP-bound translation factors. The protein is Large ribosomal subunit protein uL11 of Limosilactobacillus fermentum (strain NBRC 3956 / LMG 18251) (Lactobacillus fermentum).